The primary structure comprises 202 residues: Peptidyl-tRNA hydrolase (202 aa).

Residue Y14 participates in tRNA binding. H19 functions as the Proton acceptor in the catalytic mechanism. Positions 64, 66, and 112 each coordinate tRNA.

Belongs to the PTH family. As to quaternary structure, monomer.

It localises to the cytoplasm. The enzyme catalyses an N-acyl-L-alpha-aminoacyl-tRNA + H2O = an N-acyl-L-amino acid + a tRNA + H(+). In terms of biological role, hydrolyzes ribosome-free peptidyl-tRNAs (with 1 or more amino acids incorporated), which drop off the ribosome during protein synthesis, or as a result of ribosome stalling. Functionally, catalyzes the release of premature peptidyl moieties from peptidyl-tRNA molecules trapped in stalled 50S ribosomal subunits, and thus maintains levels of free tRNAs and 50S ribosomes. The sequence is that of Peptidyl-tRNA hydrolase from Methylobacterium radiotolerans (strain ATCC 27329 / DSM 1819 / JCM 2831 / NBRC 15690 / NCIMB 10815 / 0-1).